Here is a 383-residue protein sequence, read N- to C-terminus: G-protein coupled receptor E1 (383 aa).

The next 9 helical transmembrane spans lie at 13–35, 78–98, 109–129, 160–180, 190–210, 242–262, 279–299, 323–343, and 351–371; these read SSLA…TTIA, LYLL…IIVI, MLLL…PFWM, VFCI…AVTA, IVTC…EFFF, VIML…YVII, LIFV…IVLL, LITK…YAFV, and LYHF…PFLS. Cysteine 145 and cysteine 222 are oxidised to a cystine.

It belongs to the G-protein coupled receptor 1 family.

It is found in the host membrane. This Equine herpesvirus 2 (strain 86/87) (EHV-2) protein is G-protein coupled receptor E1 (E1).